The following is a 197-amino-acid chain: Nucleoid occlusion factor SlmA (197 aa).

Positions 7-67 (INRREHILQC…GLIEFIEESL (61 aa)) constitute an HTH tetR-type domain. The segment at residues 30–49 (TTAKLAAEVGVSEAALYRHF) is a DNA-binding region (H-T-H motif). Residues 109-136 (DALLGENERLRSRISQLFSKIETHLKQI) are a coiled coil.

It belongs to the nucleoid occlusion factor SlmA family. In terms of assembly, homodimer. Interacts with FtsZ.

The protein localises to the cytoplasm. The protein resides in the nucleoid. Required for nucleoid occlusion (NO) phenomenon, which prevents Z-ring formation and cell division over the nucleoid. Acts as a DNA-associated cell division inhibitor that binds simultaneously chromosomal DNA and FtsZ, and disrupts the assembly of FtsZ polymers. SlmA-DNA-binding sequences (SBS) are dispersed on non-Ter regions of the chromosome, preventing FtsZ polymerization at these regions. The chain is Nucleoid occlusion factor SlmA from Shewanella pealeana (strain ATCC 700345 / ANG-SQ1).